Consider the following 104-residue polypeptide: Large ribosomal subunit protein uL24 (104 aa).

This sequence belongs to the universal ribosomal protein uL24 family. Part of the 50S ribosomal subunit.

One of two assembly initiator proteins, it binds directly to the 5'-end of the 23S rRNA, where it nucleates assembly of the 50S subunit. In terms of biological role, one of the proteins that surrounds the polypeptide exit tunnel on the outside of the subunit. This Serratia proteamaculans (strain 568) protein is Large ribosomal subunit protein uL24.